Reading from the N-terminus, the 200-residue chain is Recombination protein RecR (200 aa).

The segment at 59-74 adopts a C4-type zinc-finger fold; that stretch reads CGTCGSLDVTDPCAVC. The 96-residue stretch at 82–177 folds into the Toprim domain; that stretch reads RLLCVVEEVG…PVTMLARGVP (96 aa).

Belongs to the RecR family.

In terms of biological role, may play a role in DNA repair. It seems to be involved in an RecBC-independent recombinational process of DNA repair. It may act with RecF and RecO. The protein is Recombination protein RecR of Caulobacter vibrioides (strain ATCC 19089 / CIP 103742 / CB 15) (Caulobacter crescentus).